A 318-amino-acid polypeptide reads, in one-letter code: MDKQNSQMNASHPETNLPVGYPPQYPPTAFQGPPGYSGYPGPQVSYPPPPAGHSGPGPAGFPVPNQPVYNQPVYNQPVGAAGVPWMPAPQPPLNCPPGLEYLSQIDQILIHQQIELLEVLTGFETNNKYEIKNSFGQRVYFAAEDTDCCTRNCCGPSRPFTLRIIDNMGQEVITLERPLRCSSCCCPCCLQEIEIQAPPGVPIGYVIQTWHPCLPKFTIQNEKREDVLKISGPCVVCSCCGDVDFEIKSLDEQCVVGKISKHWTGILREAFTDADNFGIQFPLDLDVKMKAVMIGACFLIDFMFFESTGSQEQKSGVW.

Over residues 1–14 the composition is skewed to polar residues; it reads MDKQNSQMNASHPE. Positions 1-64 are disordered; the sequence is MDKQNSQMNA…GPGPAGFPVP (64 aa). The tract at residues 1–84 is proline-rich domain (PRD); the sequence is MDKQNSQMNA…NQPVGAAGVP (84 aa). Over 1-288 the chain is Cytoplasmic; sequence MDKQNSQMNA…IQFPLDLDVK (288 aa). The SH3-binding 1 motif lies at 18 to 26; it reads PVGYPPQYP. 2 short sequence motifs (PPXY motif) span residues 22–25 and 33–36; these read PPQY and PPGY. Low complexity predominate over residues 31-44; that stretch reads QGPPGYSGYPGPQV. An SH3-binding 2 motif is present at residues 42–50; sequence PQVSYPPPP. Phosphotyrosine; by ABL is present on residues Y69 and Y74. The short motif at 84–92 is the SH3-binding 3 element; the sequence is PWMPAPQPP. An interaction with hepatitis C virus E2 glycoprotein region spans residues 99 to 290; it reads LEYLSQIDQI…FPLDLDVKMK (192 aa). T161 is modified (phosphothreonine; by PKC/PRKCD). Residues C184, C185, C186, C188, and C189 are each lipidated (S-palmitoyl cysteine). Positions 257–266 match the Nuclear localization signal motif; sequence GKISKHWTGI. The helical transmembrane segment at 289 to 305 threads the bilayer; that stretch reads MKAVMIGACFLIDFMFF. At 306-318 the chain is on the extracellular side; sequence ESTGSQEQKSGVW.

It belongs to the phospholipid scramblase family. Forms homooligomers in the presence of calcium. Interacts with ABL. Interacts with RELT, RELL1 and RELL2. Interacts with OXSR1 in the presence of RELT. Interacts with TOP2A and TOP2B. Interacts with OCLN. Interacts with TRPC5. Interacts with TRPC1 and TRPC4. Interacts with ILDR1. As to quaternary structure, (Microbial infection) Interacts with hepatitis C virus E1 and E2 glycoproteins. In terms of assembly, (Microbial infection) Interacts with T-cell leukemia virus (HTLV)-1 protein Tax (via N-terminus); this interaction represses Tax homodimerization. (Microbial infection) Interacts with HIV-1 protein Tat; this interaction represses the Tat-dependent transactivation of the HIV-1 long terminal repeat (LTR) and reduces the nuclear translocation of Tat. As to quaternary structure, (Microbial infection) Interacts with hepatitis B virus protein HBx; this interaction promotes the proteasomal degradation of HBx. In terms of assembly, (Microbial infection) Interacts with human cytomegalovirus proteins IE1 and IE2. (Microbial infection) Interacts with Epstein Barr virus (EBV) lytic switch protein BZLF1; this interaction negatively regulates the transcriptional regulatory activity of BZLF1 by preventing the formation of the BZLF1-CBP complex. As to quaternary structure, (Microbial infection) Interacts with influenza virus nucleoprotein NP. Requires Ca(2+) as cofactor. It depends on Mg(2+) as a cofactor. Zn(2+) is required as a cofactor. Post-translationally, phosphorylation at Thr-161 by PKC/PKCD increases its phospholipid scramblase activity during both cell stimulation and apoptosis. Phosphorylated by OXSR1 in the presence of RELT. Palmitoylation is required for its phospholipid scramblase activity. Palmitoylation regulates its localization to the cell membrane or the nucleus; trafficking to the cell membrane is dependent upon palmitoylation whereas in the absence of palmitoylation, localizes to the nucleus. Expressed in platelets, erythrocyte membranes, lymphocytes, spleen, thymus, prostate, testis, uterus, intestine, colon, heart, placenta, lung, liver, kidney and pancreas. Not detected in brain and skeletal muscle.

Its subcellular location is the cell membrane. The protein localises to the nucleus. It is found in the cytoplasm. The protein resides in the perinuclear region. It catalyses the reaction a 1,2-diacyl-sn-glycero-3-phosphocholine(in) = a 1,2-diacyl-sn-glycero-3-phosphocholine(out). The enzyme catalyses a 1,2-diacyl-sn-glycero-3-phosphoethanolamine(in) = a 1,2-diacyl-sn-glycero-3-phosphoethanolamine(out). It carries out the reaction a 1,2-diacyl-sn-glycero-3-phospho-L-serine(in) = a 1,2-diacyl-sn-glycero-3-phospho-L-serine(out). Activated by Pb(2+) and Hg(2+) ions. Phosphorylation at Thr-161 by PKC/PKCD increases its phospholipid scramblase activity during both cell stimulation and apoptosis. Its function is as follows. Catalyzes calcium-induced ATP-independent rapid bidirectional and non-specific movement of phospholipids (lipid scrambling or lipid flip-flop) between the inner and outer leaflet of the plasma membrane resulting in collapse of the phospholipid asymmetry which leads to phosphatidylserine externalization on the cell surface. Mediates calcium-dependent phosphatidylserine externalization and apoptosis in neurons via its association with TRPC5. Also exhibits magnesium-dependent nuclease activity against double-stranded DNA and RNA but not single-stranded DNA and can enhance DNA decatenation mediated by TOP2A. Negatively regulates FcR-mediated phagocytosis in differentiated macrophages. May contribute to cytokine-regulated cell proliferation and differentiation. May play a role in the antiviral response of interferon (IFN) by amplifying and enhancing the IFN response through increased expression of select subset of potent antiviral genes. Inhibits the functions of viral transactivators, including human T-cell leukemia virus (HTLV)-1 protein Tax, human immunodeficiency virus (HIV)-1 Tat, human hepatitis B virus (HBV) HBx, Epstein-Barr virus (EBV) BZLF1 and human cytomegalovirus IE1 and IE2 proteins through direct interactions. Also mediates the inhibition of influenza virus infection by preventing nuclear import of the viral nucleoprotein/NP. Plays a crucial role as a defense factor against SARS-CoV-2 independently of its scramblase activity by directly targeting nascent viral vesicles to prevent virus-membrane fusion and the release of viral RNA into the host-cell cytosol. (Microbial infection) Acts as an attachment receptor for HCV. The chain is Phospholipid scramblase 1 (PLSCR1) from Homo sapiens (Human).